The primary structure comprises 1464 residues: Sister chromatid cohesion protein PDS5 homolog B-B (1464 aa).

One copy of the HEAT repeat lies at 383-419 (LLVNDQLLNFVRERTLDKRWRVRKEAMMGLAQIYKKY). The segment at 1126–1464 (KSTNVLGAVN…MKSELEGPLL (339 aa)) is disordered. The segment covering 1137–1155 (PLSSAGKQMQSKSSRMETV) has biased composition (polar residues). The span at 1156 to 1168 (SNASSGSNPSSPG) shows a compositional bias: low complexity. A compositionally biased stretch (acidic residues) spans 1177 to 1186 (TELDQIEYED). Composition is skewed to basic and acidic residues over residues 1197–1215 (KKSD…VEKP), 1234–1244 (ELSKPAQEPKS), and 1265–1274 (WQEKRLKEDL). Positions 1286–1295 (KKGRRGRPPK) are enriched in basic residues. Residues 1287 to 1299 (KGRRGRPPKSAKM) constitute a DNA-binding region (a.T hook 1). Residues 1325 to 1342 (PTDEEDHLEISEEQDSEN) are compositionally biased toward acidic residues. A compositionally biased stretch (basic residues) spans 1347 to 1357 (RKGRGSSKKTP). A compositionally biased stretch (polar residues) spans 1359–1373 (KSDSTDSALDTSRPT). 2 consecutive DNA-binding regions (a.T hook) follow at residues 1375-1387 (QKRR…TPTV) and 1391-1403 (KSHV…VVSK). Basic residues predominate over residues 1390–1400 (KKSHVGRPRKV). The span at 1425–1435 (SNEEETADEEV) shows a compositional bias: acidic residues. Residues 1441–1453 (GRRRTAKKRRWIQ) are compositionally biased toward basic residues. Residues 1455–1464 (MKSELEGPLL) are compositionally biased toward basic and acidic residues.

The protein belongs to the PDS5 family. As to quaternary structure, interacts with the cohesin complex. In terms of processing, phosphorylated in mitotic cells.

Its subcellular location is the nucleus. Plays a role in androgen-induced proliferative arrest. Required for maintenance of sister chromatid cohesion during mitosis. In Xenopus laevis (African clawed frog), this protein is Sister chromatid cohesion protein PDS5 homolog B-B (pds5b-b).